Reading from the N-terminus, the 253-residue chain is 3-deoxy-manno-octulosonate cytidylyltransferase (253 aa).

Belongs to the KdsB family.

It localises to the cytoplasm. It catalyses the reaction 3-deoxy-alpha-D-manno-oct-2-ulosonate + CTP = CMP-3-deoxy-beta-D-manno-octulosonate + diphosphate. It functions in the pathway nucleotide-sugar biosynthesis; CMP-3-deoxy-D-manno-octulosonate biosynthesis; CMP-3-deoxy-D-manno-octulosonate from 3-deoxy-D-manno-octulosonate and CTP: step 1/1. Its pathway is bacterial outer membrane biogenesis; lipopolysaccharide biosynthesis. In terms of biological role, activates KDO (a required 8-carbon sugar) for incorporation into bacterial lipopolysaccharide in Gram-negative bacteria. The polypeptide is 3-deoxy-manno-octulosonate cytidylyltransferase (Geotalea daltonii (strain DSM 22248 / JCM 15807 / FRC-32) (Geobacter daltonii)).